The following is a 299-amino-acid chain: rRNA methyltransferase (299 aa).

The interval 14–53 (AEKRSGRGRMAAARTTGAQSRKTAQRSGRSEADRRRRVHG) is disordered. A compositionally biased stretch (low complexity) spans 21 to 31 (GRMAAARTTGA). S-adenosyl-L-methionine contacts are provided by N55, L57, G82, E103, D128, and N144.

It belongs to the class I-like SAM-binding methyltransferase superfamily. rRNA adenine N(6)-methyltransferase family.

Probable RNA methylase. Confers resistance to carbomycin and several other macrolides, lincomycin and vernamycin B, but not to all macrolide-lincosamide-streptogramin B antibiotics. This is rRNA methyltransferase (carB) from Streptomyces thermotolerans.